The sequence spans 55 residues: Large ribosomal subunit protein bL33 (55 aa).

Belongs to the bacterial ribosomal protein bL33 family.

The sequence is that of Large ribosomal subunit protein bL33 from Mesorhizobium japonicum (strain LMG 29417 / CECT 9101 / MAFF 303099) (Mesorhizobium loti (strain MAFF 303099)).